Reading from the N-terminus, the 488-residue chain is Ribulose bisphosphate carboxylase large chain (488 aa).

2 residues coordinate substrate: N127 and T177. K179 acts as the Proton acceptor in catalysis. K181 lines the substrate pocket. Mg(2+) is bound by residues K205, D207, and E208. Position 205 is an N6-carboxylysine (K205). Residue H297 is the Proton acceptor of the active site. Residues R298, H330, and S382 each contribute to the substrate site.

Belongs to the RuBisCO large chain family. Type I subfamily. As to quaternary structure, heterohexadecamer of 8 large chains and 8 small chains. Mg(2+) serves as cofactor.

It is found in the plastid. The protein localises to the chloroplast. It catalyses the reaction 2 (2R)-3-phosphoglycerate + 2 H(+) = D-ribulose 1,5-bisphosphate + CO2 + H2O. It carries out the reaction D-ribulose 1,5-bisphosphate + O2 = 2-phosphoglycolate + (2R)-3-phosphoglycerate + 2 H(+). In terms of biological role, ruBisCO catalyzes two reactions: the carboxylation of D-ribulose 1,5-bisphosphate, the primary event in carbon dioxide fixation, as well as the oxidative fragmentation of the pentose substrate in the photorespiration process. Both reactions occur simultaneously and in competition at the same active site. This Ectocarpus siliculosus (Brown alga) protein is Ribulose bisphosphate carboxylase large chain.